The following is a 246-amino-acid chain: E3 ubiquitin-protein ligase MARCHF2 (246 aa).

An RING-CH-type zinc finger spans residues Asp56 to Glu116. Zn(2+) is bound by residues Cys64, Cys67, Cys80, Cys82, His90, Cys93, Cys106, and Cys109. Positions Pro121–Val246 are required for interaction with IKBKG. The next 2 membrane-spanning stretches (helical) occupy residues Leu138–Leu158 and Ala175–Val195.

As to quaternary structure, interacts with STX6; the interaction promotes MARCHF2-mediated ubiquitination and degradation of CFTR. Interacts with MARCHF3. Interacts with GOPC/CAL; the interaction leads to CFTR ubiquitination and degradation. Interacts with CFTR; the interaction leads to CFTR ubiqtuitination and degradation. Interacts (via PDZ domain) with DLG1 (via PDZ domains); the interaction leads to DLG1 ubiqtuitination and degradation. Interacts with ERGIC3. Interacts with ADRB2. Interacts with IKBKG/NEMO; during the late stages of macrophage viral and bacterial infection; the interaction leads to ubiquitination and degradation of IKBKG/NEMO. In terms of tissue distribution, ubiquitously expressed. Present in liver (at protein level).

The protein resides in the endoplasmic reticulum membrane. It is found in the lysosome membrane. The protein localises to the endosome membrane. Its subcellular location is the golgi apparatus membrane. It localises to the cytoplasm. The protein resides in the cell membrane. The catalysed reaction is S-ubiquitinyl-[E2 ubiquitin-conjugating enzyme]-L-cysteine + [acceptor protein]-L-lysine = [E2 ubiquitin-conjugating enzyme]-L-cysteine + N(6)-ubiquitinyl-[acceptor protein]-L-lysine.. The protein operates within protein modification; protein ubiquitination. In terms of biological role, E3 ubiquitin-protein ligase that may mediate ubiquitination of TFRC and CD86, and promote their subsequent endocytosis and sorting to lysosomes via multivesicular bodies. E3 ubiquitin ligases accept ubiquitin from an E2 ubiquitin-conjugating enzyme in the form of a thioester and then directly transfer the ubiquitin to targeted substrates. Together with GOPC/CAL mediates the ubiquitination and lysosomal degradation of CFTR. Ubiquitinates and therefore mediates the degradation of DLG1. Regulates the intracellular trafficking and secretion of alpha1-antitrypsin/SERPINA1 and HP/haptoglobin via ubiquitination and degradation of the cargo receptor ERGIC3. Negatively regulates the antiviral and antibacterial immune response by repression of the NF-kB and type 1 IFN signaling pathways, via MARCHF2-mediated K48-linked polyubiquitination of IKBKG/NEMO, resulting in its proteasomal degradation. May be involved in endosomal trafficking through interaction with STX6. This Rattus norvegicus (Rat) protein is E3 ubiquitin-protein ligase MARCHF2 (Marchf2).